The following is a 254-amino-acid chain: Phosphoribosylaminoimidazole-succinocarboxamide synthase (254 aa).

Belongs to the SAICAR synthetase family.

The catalysed reaction is 5-amino-1-(5-phospho-D-ribosyl)imidazole-4-carboxylate + L-aspartate + ATP = (2S)-2-[5-amino-1-(5-phospho-beta-D-ribosyl)imidazole-4-carboxamido]succinate + ADP + phosphate + 2 H(+). It participates in purine metabolism; IMP biosynthesis via de novo pathway; 5-amino-1-(5-phospho-D-ribosyl)imidazole-4-carboxamide from 5-amino-1-(5-phospho-D-ribosyl)imidazole-4-carboxylate: step 1/2. The polypeptide is Phosphoribosylaminoimidazole-succinocarboxamide synthase (Bartonella tribocorum (strain CIP 105476 / IBS 506)).